The chain runs to 311 residues: MTLHEPLGLIDAARELRGFQAEPAQMRAGAPGKVGRLRLGFSLRDGRSVLHDLYRAAPLLVQQALYWDEAMPELPVCPIISVGGGILQGDRYTIDIAVGEGACAHVSTQGANRIHCMDANYASQHQTVTVAAGGYLEYLPDFTIPYRGSRFLSRTDLVVAADATLLYGEMVLAGRKHHHVEERFGFDLLSMDVNLRRPGGHKLVAEKILIEKGDPTIAFAAVMRGFDAFANILCVTPPETAARIKERFEPHFPIEAPRALSGVSRLPNAAGLMLRAVGVETYDVRHEVRRFWRIVREEARDRSLPAEPYWR.

It belongs to the UreD family. UreD, UreF and UreG form a complex that acts as a GTP-hydrolysis-dependent molecular chaperone, activating the urease apoprotein by helping to assemble the nickel containing metallocenter of UreC. The UreE protein probably delivers the nickel.

Its subcellular location is the cytoplasm. Required for maturation of urease via the functional incorporation of the urease nickel metallocenter. The polypeptide is Urease accessory protein UreD 2 (Methylorubrum extorquens (strain PA1) (Methylobacterium extorquens)).